Consider the following 330-residue polypeptide: Methylthioribose-1-phosphate isomerase (330 aa).

Residues 49–51 (RGA), R83, and Q179 contribute to the substrate site. D220 functions as the Proton donor in the catalytic mechanism. 230–231 (NK) contacts substrate.

The protein belongs to the eIF-2B alpha/beta/delta subunits family. MtnA subfamily.

The enzyme catalyses 5-(methylsulfanyl)-alpha-D-ribose 1-phosphate = 5-(methylsulfanyl)-D-ribulose 1-phosphate. Its pathway is amino-acid biosynthesis; L-methionine biosynthesis via salvage pathway; L-methionine from S-methyl-5-thio-alpha-D-ribose 1-phosphate: step 1/6. Functionally, catalyzes the interconversion of methylthioribose-1-phosphate (MTR-1-P) into methylthioribulose-1-phosphate (MTRu-1-P). The polypeptide is Methylthioribose-1-phosphate isomerase (Thermus thermophilus (strain ATCC 27634 / DSM 579 / HB8)).